We begin with the raw amino-acid sequence, 305 residues long: Glutaminase (305 aa).

Substrate-binding residues include S61, N113, E158, N165, Y189, Y241, and V259.

Belongs to the glutaminase family. Homotetramer.

It catalyses the reaction L-glutamine + H2O = L-glutamate + NH4(+). The protein is Glutaminase of Clostridium botulinum (strain ATCC 19397 / Type A).